Consider the following 333-residue polypeptide: MFKIGDIQLKNRVVLAPMAGVCNSAFRLTVKEFGAGLVCAEMVSDKAILYNNARTMGMLYIDEREKPLSLQIFGGKKETLVEAAKFVDQNTTADIIDINMGCPVPKITKCDAGAKWLLDPDKIYEMVSAVVDAVNKPVTVKMRMGWDEDHIFAVKNAQAVERAGGKAVALHGRTRVQMYEGTANWDIIKEVKQSVSIPVIGNGDVKTPQDAKRMLDETGVDGVMIGRAALGNPWMIYRTVQYLETGKLKEEPQVREKMAVCKLHLDRLIDLKGENVAVREMRKHAAWYLKGVKGNANVRNEINHCETREEFVQLLDAFTVEVEAKELQNAKVG.

FMN is bound by residues 17-19 and Gln-71; that span reads PMA. Cys-102 serves as the catalytic Proton donor. Residues Lys-141, 202–204, and 226–227 contribute to the FMN site; these read NGD and GR.

It belongs to the Dus family. The cofactor is FMN.

It catalyses the reaction a 5,6-dihydrouridine in tRNA + NAD(+) = a uridine in tRNA + NADH + H(+). The catalysed reaction is a 5,6-dihydrouridine in tRNA + NADP(+) = a uridine in tRNA + NADPH + H(+). Its function is as follows. Catalyzes the synthesis of 5,6-dihydrouridine (D), a modified base found in the D-loop of most tRNAs, via the reduction of the C5-C6 double bond in target uridines. The sequence is that of Probable tRNA-dihydrouridine synthase 1 (dus1) from Bacillus subtilis (strain 168).